Reading from the N-terminus, the 348-residue chain is tRNA pseudouridine synthase D (348 aa).

The Nucleophile role is filled by Asp-84. Residues 162–308 enclose the TRUD domain; sequence GVPNYFGPQR…ARMDRRPLCL (147 aa).

The protein belongs to the pseudouridine synthase TruD family.

The enzyme catalyses uridine(13) in tRNA = pseudouridine(13) in tRNA. Its function is as follows. Responsible for synthesis of pseudouridine from uracil-13 in transfer RNAs. In Chromohalobacter salexigens (strain ATCC BAA-138 / DSM 3043 / CIP 106854 / NCIMB 13768 / 1H11), this protein is tRNA pseudouridine synthase D.